A 229-amino-acid polypeptide reads, in one-letter code: Large ribosomal subunit protein uL1 (229 aa).

It belongs to the universal ribosomal protein uL1 family. In terms of assembly, part of the 50S ribosomal subunit.

In terms of biological role, binds directly to 23S rRNA. The L1 stalk is quite mobile in the ribosome, and is involved in E site tRNA release. Functionally, protein L1 is also a translational repressor protein, it controls the translation of the L11 operon by binding to its mRNA. The protein is Large ribosomal subunit protein uL1 of Latilactobacillus sakei subsp. sakei (strain 23K) (Lactobacillus sakei subsp. sakei).